The following is a 152-amino-acid chain: UPF0225 protein YchJ (152 aa).

It belongs to the UPF0225 family.

This Escherichia coli O17:K52:H18 (strain UMN026 / ExPEC) protein is UPF0225 protein YchJ.